The sequence spans 216 residues: Probable transaldolase (216 aa).

Lysine 83 acts as the Schiff-base intermediate with substrate in catalysis.

The protein belongs to the transaldolase family. Type 3B subfamily.

The protein localises to the cytoplasm. It catalyses the reaction D-sedoheptulose 7-phosphate + D-glyceraldehyde 3-phosphate = D-erythrose 4-phosphate + beta-D-fructose 6-phosphate. It functions in the pathway carbohydrate degradation; pentose phosphate pathway; D-glyceraldehyde 3-phosphate and beta-D-fructose 6-phosphate from D-ribose 5-phosphate and D-xylulose 5-phosphate (non-oxidative stage): step 2/3. In terms of biological role, transaldolase is important for the balance of metabolites in the pentose-phosphate pathway. The chain is Probable transaldolase from Methanococcus aeolicus (strain ATCC BAA-1280 / DSM 17508 / OCM 812 / Nankai-3).